Here is a 128-residue protein sequence, read N- to C-terminus: CD59 glycoprotein (128 aa).

The N-terminal stretch at 1-25 (MGIQGGSVLFGLLLILAVFCHSGHS) is a signal peptide. The 83-residue stretch at 26 to 108 (LQCYSCPYST…ILENGGTTLS (83 aa)) folds into the UPAR/Ly6 domain. Intrachain disulfides connect Cys28/Cys51, Cys31/Cys38, Cys44/Cys64, Cys70/Cys88, and Cys89/Cys94. Asn43 is a glycosylation site (N-linked (GlcNAc...) asparagine). A lipid anchor (GPI-anchor amidated asparagine) is attached at Asn102. Positions 103 to 128 (GGTTLSKKTVLLLVTPFLAAAWSLHP) are cleaved as a propeptide — removed in mature form.

In terms of assembly, interacts with T-cell surface antigen CD2. In terms of processing, N- and O-glycosylated.

The protein resides in the cell membrane. Its subcellular location is the secreted. In terms of biological role, potent inhibitor of the complement membrane attack complex (MAC) action, which protects self-cells from damage during complement activation. Acts by binding to the beta-haipins of C8 (C8A and C8B) components of the assembling MAC, forming an intermolecular beta-sheet that prevents incorporation of the multiple copies of C9 required for complete formation of the osmolytic pore. This Callithrix sp. (Marmoset) protein is CD59 glycoprotein.